The following is a 118-amino-acid chain: Large ribosomal subunit protein bL20 (118 aa).

It belongs to the bacterial ribosomal protein bL20 family.

Binds directly to 23S ribosomal RNA and is necessary for the in vitro assembly process of the 50S ribosomal subunit. It is not involved in the protein synthesizing functions of that subunit. The chain is Large ribosomal subunit protein bL20 from Pseudomonas fluorescens (strain ATCC BAA-477 / NRRL B-23932 / Pf-5).